A 108-amino-acid chain; its full sequence is UPF0145 protein LCABL_07110 (108 aa).

This sequence belongs to the UPF0145 family.

The protein is UPF0145 protein LCABL_07110 of Lacticaseibacillus casei (strain BL23) (Lactobacillus casei).